Reading from the N-terminus, the 173-residue chain is dCTP deaminase (173 aa).

DCTP is bound by residues 97–102 (RSSFAR) and Asp113. The Proton donor/acceptor role is filled by Glu123. 2 residues coordinate dCTP: Tyr155 and Gln162.

The protein belongs to the dCTP deaminase family. In terms of assembly, homotrimer.

It carries out the reaction dCTP + H2O + H(+) = dUTP + NH4(+). It functions in the pathway pyrimidine metabolism; dUMP biosynthesis; dUMP from dCTP (dUTP route): step 1/2. Its function is as follows. Catalyzes the deamination of dCTP to dUTP. The chain is dCTP deaminase from Acidianus ambivalens (Desulfurolobus ambivalens).